The following is a 405-amino-acid chain: Probable succinyl-diaminopimelate desuccinylase (405 aa).

A Zn(2+)-binding site is contributed by His72. Asp74 is an active-site residue. Asp105 contacts Zn(2+). Glu139 (proton acceptor) is an active-site residue. Zn(2+) is bound by residues Glu140, Glu165, and His377.

It belongs to the peptidase M20A family. It depends on Zn(2+) as a cofactor. The cofactor is Co(2+).

It catalyses the reaction N-succinyl-(2S,6S)-2,6-diaminopimelate + H2O = (2S,6S)-2,6-diaminopimelate + succinate. It participates in amino-acid biosynthesis; L-lysine biosynthesis via DAP pathway; LL-2,6-diaminopimelate from (S)-tetrahydrodipicolinate (succinylase route): step 3/3. This Staphylococcus epidermidis (strain ATCC 12228 / FDA PCI 1200) protein is Probable succinyl-diaminopimelate desuccinylase (dapE).